Here is a 277-residue protein sequence, read N- to C-terminus: Bis(5'-nucleosyl)-tetraphosphatase, symmetrical (277 aa).

This sequence belongs to the Ap4A hydrolase family.

It catalyses the reaction P(1),P(4)-bis(5'-adenosyl) tetraphosphate + H2O = 2 ADP + 2 H(+). Functionally, hydrolyzes diadenosine 5',5'''-P1,P4-tetraphosphate to yield ADP. This chain is Bis(5'-nucleosyl)-tetraphosphatase, symmetrical, found in Bordetella bronchiseptica (strain ATCC BAA-588 / NCTC 13252 / RB50) (Alcaligenes bronchisepticus).